A 209-amino-acid chain; its full sequence is Large ribosomal subunit protein uL4 (209 aa).

This sequence belongs to the universal ribosomal protein uL4 family. In terms of assembly, part of the 50S ribosomal subunit.

In terms of biological role, one of the primary rRNA binding proteins, this protein initially binds near the 5'-end of the 23S rRNA. It is important during the early stages of 50S assembly. It makes multiple contacts with different domains of the 23S rRNA in the assembled 50S subunit and ribosome. Its function is as follows. Forms part of the polypeptide exit tunnel. This Borrelia duttonii (strain Ly) protein is Large ribosomal subunit protein uL4.